The chain runs to 198 residues: Mitrocomin (198 aa).

A propeptide spanning residues 1–8 (MSMGSRYA) is cleaved from the precursor. EF-hand domains follow at residues 19-54 (KWIA…IICK), 118-147 (DALF…AGIQ), and 148-183 (QSRG…FWYS). Positions 32, 34, 36, 38, 43, 125, 127, 129, 131, 136, 161, 163, 165, 167, and 172 each coordinate Ca(2+).

The protein belongs to the aequorin family.

Ca(2+)-dependent bioluminescence photoprotein. Displays an emission peak at 470 nm (blue light). Trace amounts of calcium ion trigger the intramolecular oxidation of the chromophore, coelenterazine into coelenteramide and CO(2) with the concomitant emission of light. In Mitrocoma cellularia (Cross jellyfish), this protein is Mitrocomin (MI17).